The primary structure comprises 445 residues: Exodeoxyribonuclease 7 large subunit (445 aa).

This sequence belongs to the XseA family. In terms of assembly, heterooligomer composed of large and small subunits.

Its subcellular location is the cytoplasm. It carries out the reaction Exonucleolytic cleavage in either 5'- to 3'- or 3'- to 5'-direction to yield nucleoside 5'-phosphates.. Its function is as follows. Bidirectionally degrades single-stranded DNA into large acid-insoluble oligonucleotides, which are then degraded further into small acid-soluble oligonucleotides. The sequence is that of Exodeoxyribonuclease 7 large subunit from Delftia acidovorans (strain DSM 14801 / SPH-1).